A 701-amino-acid polypeptide reads, in one-letter code: E3 ubiquitin-protein ligase RNF19B (701 aa).

The disordered stretch occupies residues 1–97 (MGSEKDSESP…PAEPLSTSQA (97 aa)). The segment at 1-304 (MGSEKDSESP…VCGCEFCWLC (304 aa)) is required for ubiquitin ligase activity and for protection against staurosporin-induced cell death. Low complexity predominate over residues 57-72 (QQLHQQQQIQQQQLLQ). The TRIAD supradomain stretch occupies residues 103–323 (ELLECPLCLV…LSPSGCTFWG (221 aa)). Residues Cys107, Cys110, Cys130, Cys133, Cys194, Cys199, Cys216, Cys221, Cys226, Cys229, His234, Cys239, Cys273, and Cys276 each contribute to the Zn(2+) site. Residues 107–156 (CPLCLVRQPAEQLPELQGCSHRSCLCCLRQYLRIEITESRVQLSCPECAE) form an RING-type 1 zinc finger. The segment at 174-239 (EKYEEFLLRR…KQAWHPNQTC (66 aa)) adopts an IBR-type zinc-finger fold. The segment at 273–304 (CPRCGAYIIKMNDGSCNHMTCAVCGCEFCWLC) adopts an RING-type 2; atypical zinc-finger fold. Cys288 is an active-site residue. Zn(2+) is bound by residues Cys293, Cys296, Cys301, Cys304, His312, and Cys319. The next 2 membrane-spanning stretches (helical) occupy residues 340 to 360 (LIGAPVGITLIAGIAVPAMVI) and 396 to 416 (IITAPVIAAVSVGIGVPIMLA). Disordered stretches follow at residues 472 to 495 (LEGAASGLSTTSPSEGLSVAPGGL) and 658 to 677 (AELTSDDCDSPHPKSCHGAP).

Belongs to the RBR family. RNF19 subfamily. Interacts with UBE2L3, UBE2L6 and UCKL1.

The protein resides in the cytoplasmic granule membrane. It localises to the endoplasmic reticulum membrane. It carries out the reaction [E2 ubiquitin-conjugating enzyme]-S-ubiquitinyl-L-cysteine + [acceptor protein]-L-lysine = [E2 ubiquitin-conjugating enzyme]-L-cysteine + [acceptor protein]-N(6)-ubiquitinyl-L-lysine.. It participates in protein modification; protein ubiquitination. E3 ubiquitin-protein ligase which accepts ubiquitin from E2 ubiquitin-conjugating enzymes UBE2L3 and UBE2L6 in the form of a thioester and then directly transfers the ubiquitin to targeted substrates, such as UCKL1. Involved in the cytolytic activity of natural killer cells and cytotoxic T-cells. Protects against staurosporin-induced cell death. The polypeptide is E3 ubiquitin-protein ligase RNF19B (rnf19b) (Danio rerio (Zebrafish)).